Consider the following 133-residue polypeptide: Large ribosomal subunit protein bL19 (133 aa).

It belongs to the bacterial ribosomal protein bL19 family.

Its function is as follows. This protein is located at the 30S-50S ribosomal subunit interface and may play a role in the structure and function of the aminoacyl-tRNA binding site. The chain is Large ribosomal subunit protein bL19 from Stenotrophomonas maltophilia (strain R551-3).